Reading from the N-terminus, the 303-residue chain is Protoheme IX farnesyltransferase 1 (303 aa).

9 helical membrane passes run 18–38 (PGII…AAQG), 42–62 (LTLM…GCAV), 91–111 (AVLS…AIFT), 114–134 (LAVL…SLYM), 139–159 (VYGT…GYCA), 169–189 (VILL…IAIF), 213–233 (LHIV…PLAG), 235–255 (TGIA…AMAL), and 274–294 (FSII…QVVA).

Belongs to the UbiA prenyltransferase family. Protoheme IX farnesyltransferase subfamily.

It is found in the cell inner membrane. The catalysed reaction is heme b + (2E,6E)-farnesyl diphosphate + H2O = Fe(II)-heme o + diphosphate. It functions in the pathway porphyrin-containing compound metabolism; heme O biosynthesis; heme O from protoheme: step 1/1. Converts heme B (protoheme IX) to heme O by substitution of the vinyl group on carbon 2 of heme B porphyrin ring with a hydroxyethyl farnesyl side group. The polypeptide is Protoheme IX farnesyltransferase 1 (Shewanella frigidimarina (strain NCIMB 400)).